Here is a 335-residue protein sequence, read N- to C-terminus: Acetyl-coenzyme A carboxylase carboxyl transferase subunit alpha (335 aa).

The CoA carboxyltransferase C-terminal domain occupies 40–294 (QLETLATRRR…KASIERHLSE (255 aa)).

This sequence belongs to the AccA family. As to quaternary structure, acetyl-CoA carboxylase is a heterohexamer composed of biotin carboxyl carrier protein (AccB), biotin carboxylase (AccC) and two subunits each of ACCase subunit alpha (AccA) and ACCase subunit beta (AccD).

Its subcellular location is the cytoplasm. It catalyses the reaction N(6)-carboxybiotinyl-L-lysyl-[protein] + acetyl-CoA = N(6)-biotinyl-L-lysyl-[protein] + malonyl-CoA. It functions in the pathway lipid metabolism; malonyl-CoA biosynthesis; malonyl-CoA from acetyl-CoA: step 1/1. Its function is as follows. Component of the acetyl coenzyme A carboxylase (ACC) complex. First, biotin carboxylase catalyzes the carboxylation of biotin on its carrier protein (BCCP) and then the CO(2) group is transferred by the carboxyltransferase to acetyl-CoA to form malonyl-CoA. This is Acetyl-coenzyme A carboxylase carboxyl transferase subunit alpha from Prochlorococcus marinus (strain MIT 9515).